Consider the following 243-residue polypeptide: MHPIRCEAVVLATMDYRESDRIVTLFTLCHGKVRGLARGARKSMRRFGGALEPFARLSVELVVREGLSSLRGVDIVTVYPRIRQDLAAIGHGGYAVELVDRLLPDGASVPRLFRLLVSYLEHLDQGGASPSDRRFFEANLLNILGYRLSLDACAACGVEFPADAARRAGAAGTVLCTGCGRYGAPLSAETVRLLHRCLGTGRFGAIVFPPEPLGEAGPLLDGAIGAHLARPLNSLAFLRQLTP.

Belongs to the RecO family.

Functionally, involved in DNA repair and RecF pathway recombination. In Geobacter sulfurreducens (strain ATCC 51573 / DSM 12127 / PCA), this protein is DNA repair protein RecO.